The sequence spans 88 residues: Small ribosomal subunit protein uS17 (88 aa).

It belongs to the universal ribosomal protein uS17 family. Part of the 30S ribosomal subunit.

In terms of biological role, one of the primary rRNA binding proteins, it binds specifically to the 5'-end of 16S ribosomal RNA. This Teredinibacter turnerae (strain ATCC 39867 / T7901) protein is Small ribosomal subunit protein uS17.